Consider the following 543-residue polypeptide: Germacrene A synthase (543 aa).

Residues Asp296, Asp300, Asp439, and Glu447 each contribute to the Mg(2+) site. The short motif at 296 to 300 (DDTYD) is the DDXXD motif element.

Belongs to the terpene synthase family. Tpsa subfamily. Requires Mg(2+) as cofactor. The cofactor is Mn(2+). As to expression, barely detectable in leaves.

It is found in the plastid. It localises to the chloroplast. It catalyses the reaction (2E,6E)-farnesyl diphosphate = germacrene A + diphosphate. The catalysed reaction is (2E,6E)-farnesyl diphosphate = (1S,2S,4R)-beta-elemene + diphosphate. Its pathway is secondary metabolite biosynthesis; terpenoid biosynthesis. Sesquiterpene synthase involved in the biosynthesis of volatile compounds widely used in aromatherapy and folk medicine, and present in culinary herbs. Mediates the conversion of (2E,6E)-farnesyl diphosphate (FPP) into germacrene A and beta-elemene. Not able to use (2E)-geranyl diphosphate (GPP) as substrate. The protein is Germacrene A synthase of Lavandula viridis (Green lavender).